Consider the following 126-residue polypeptide: Large ribosomal subunit protein bL12 (126 aa).

The protein belongs to the bacterial ribosomal protein bL12 family. As to quaternary structure, homodimer. Part of the ribosomal stalk of the 50S ribosomal subunit. Forms a multimeric L10(L12)X complex, where L10 forms an elongated spine to which 2 to 4 L12 dimers bind in a sequential fashion. Binds GTP-bound translation factors.

Forms part of the ribosomal stalk which helps the ribosome interact with GTP-bound translation factors. Is thus essential for accurate translation. This Desulforudis audaxviator (strain MP104C) protein is Large ribosomal subunit protein bL12.